Here is a 184-residue protein sequence, read N- to C-terminus: Photosystem I assembly protein Ycf4 (184 aa).

Transmembrane regions (helical) follow at residues 22 to 42 (FCWA…GTSS) and 57 to 77 (ILFF…LFIS).

The protein belongs to the Ycf4 family.

Its subcellular location is the plastid. It is found in the chloroplast thylakoid membrane. Seems to be required for the assembly of the photosystem I complex. In Phalaenopsis aphrodite subsp. formosana (Moth orchid), this protein is Photosystem I assembly protein Ycf4.